The following is a 370-amino-acid chain: Aminomethyltransferase (370 aa).

This sequence belongs to the GcvT family. In terms of assembly, the glycine cleavage system is composed of four proteins: P, T, L and H.

It catalyses the reaction N(6)-[(R)-S(8)-aminomethyldihydrolipoyl]-L-lysyl-[protein] + (6S)-5,6,7,8-tetrahydrofolate = N(6)-[(R)-dihydrolipoyl]-L-lysyl-[protein] + (6R)-5,10-methylene-5,6,7,8-tetrahydrofolate + NH4(+). Its function is as follows. The glycine cleavage system catalyzes the degradation of glycine. This Clostridium botulinum (strain 657 / Type Ba4) protein is Aminomethyltransferase.